Reading from the N-terminus, the 92-residue chain is Small ribosomal subunit protein uS19c (92 aa).

The protein belongs to the universal ribosomal protein uS19 family.

The protein resides in the plastid. Its subcellular location is the chloroplast. Its function is as follows. Protein S19 forms a complex with S13 that binds strongly to the 16S ribosomal RNA. The protein is Small ribosomal subunit protein uS19c of Populus alba (White poplar).